The following is a 1681-amino-acid chain: Sodium channel protein type 7 subunit alpha (1681 aa).

The Cytoplasmic segment spans residues 1–118; it reads MLTSPEPKGL…RRAAIKALVH (118 aa). The I repeat unit spans residues 101–402; sequence TLSPLNSLRR…ILTMTYEKEK (302 aa). A helical membrane pass occupies residues 119 to 138; that stretch reads PLFRLLILISVLTDSILMCM. The Extracellular portion of the chain corresponds to 139–142; it reads SNLP. A helical membrane pass occupies residues 143-168; it reads EWILAIENTLLGIYAFEILVKVIARG. Over 169 to 179 the chain is Cytoplasmic; that stretch reads IWAGSFSFLGD. The helical transmembrane segment at 180-197 threads the bilayer; the sequence is LWNWLDFSVTLFELITRF. Residues 198–201 lie on the Extracellular side of the membrane; sequence SPLS. The helical transmembrane segment at 202–220 threads the bilayer; sequence SFLMLKTIRTFRILKIIPL. The Cytoplasmic portion of the chain corresponds to 221–238; sequence NHGLQSIVMTLAQCLKKL. A helical transmembrane segment spans residues 239–260; the sequence is FGAIALALFFLAVFSLLGMGLF. Residues 261–339 are Extracellular-facing; it reads MGNLKHKCLR…PDNGFTSFDN (79 aa). The cysteines at positions 268 and 308 are disulfide-linked. N-linked (GlcNAc...) asparagine glycosylation is found at asparagine 277, asparagine 282, asparagine 288, and asparagine 310. An intramembrane region (pore-forming) is located at residues 340–367; it reads FGWSLLAMFRLMTQDYPELLYHQILYAS. Position 368 (glycine 368) is a topological domain, extracellular. A helical transmembrane segment spans residues 369-408; sequence KVYMIFFVMISFWFAFYLTSLFLGILTMTYEKEKQRACEE. The Cytoplasmic portion of the chain corresponds to 409–506; it reads SGGLDPKCQQ…EFADRVITHP (98 aa). The stretch at 488 to 757 is one II repeat; the sequence is CSPCWVKLNE…QLAMARIKSG (270 aa). Residues 507 to 522 traverse the membrane as a helical segment; it reads LADLFLVICIVLNICF. The Extracellular portion of the chain corresponds to 523–531; it reads LALEHFPMS. The chain crosses the membrane as a helical span at residues 532–560; that stretch reads EELRSLLHVGNLVFIGIYTIEMILKIIAM. Topologically, residues 561 to 569 are cytoplasmic; it reads HPYGYFQIS. The helical transmembrane segment at 570 to 587 threads the bilayer; the sequence is WNIFDSILVVLELTEILL. Topologically, residues 588–593 are extracellular; it reads ADVEGL. The chain crosses the membrane as a helical span at residues 594–609; that stretch reads AVLITVPLIFIKLGKY. Over 610 to 626 the chain is Cytoplasmic; sequence GPPFKSLMRILGSSLMA. Residues 627-655 traverse the membrane as a helical segment; that stretch reads LKDLVLLLCIFVYFSAVFGMKLFGRSYKD. At 656–673 the chain is on the extracellular side; sequence CVCHIKEDCQPQRWHMSD. 2 cysteine pairs are disulfide-bonded: cysteine 658–cysteine 664 and cysteine 696–cysteine 705. An intramembrane region (pore-forming) is located at residues 674–700; it reads FLHAYMTVFRILCGEWIETLWECMEVA. A topological domain (extracellular) is located at residue glycine 701. A helical membrane pass occupies residues 702-732; sequence QAWCIPFYMMVILIGNLLILYLFVTLVSSFS. Over 733 to 934 the chain is Cytoplasmic; the sequence is YYDATSEVNK…KTCCKIVENS (202 aa). Residues 806–834 are compositionally biased toward polar residues; it reads YKDQSSSTEKTPVTESESQSLIASPSASE. The disordered stretch occupies residues 806–875; sequence YKDQSSSTEK…MKQSSSSECS (70 aa). Serine 843 carries the phosphoserine modification. The stretch at 916 to 1224 is one III repeat; that stretch reads NGKIWKNIRK…KKQYRALKKL (309 aa). The helical transmembrane segment at 935–953 threads the bilayer; it reads WFECFIGLVTLLCTGTLAL. Residues 954–961 lie on the Extracellular side of the membrane; that stretch reads EDIYIDQR. A helical transmembrane segment spans residues 962-990; the sequence is KTTKILLEYADMIFAYIFILEMLLKWVAY. At 991–998 the chain is on the cytoplasmic side; that stretch reads GFKAFFSN. A helical membrane pass occupies residues 999 to 1020; sequence NWYKLDFMVVIVFCLSLIGKTR. A topological domain (extracellular) is located at residue glutamate 1021. Residues 1022–1040 traverse the membrane as a helical segment; that stretch reads DLNPLTSIKFLRALRVLSQ. The Cytoplasmic portion of the chain corresponds to 1041–1055; the sequence is FERMKVVLRALIKTT. Residues 1056–1080 traverse the membrane as a helical segment; that stretch reads LPTVSVFLVCLMIWLLFSVIGVQLF. Topologically, residues 1081 to 1127 are extracellular; that stretch reads AGKFYECIDPTKGERFPVFEVMNKSQCEKLLFNESMPWENAKLNFDN. An intrachain disulfide couples cysteine 1087 to cysteine 1107. N-linked (GlcNAc...) asparagine glycosylation is found at asparagine 1103 and asparagine 1113. The pore-forming intramembrane region spans 1128-1154; the sequence is VGNGFLSLLQVATFNGWISIMNSAIDS. Residues 1155-1167 lie on the Extracellular side of the membrane; sequence VGVNMQPSFEYNL. A helical membrane pass occupies residues 1168–1202; sequence YMYSYFIIFVIFGLFLPLCMLIGVIIRNFNKQKIK. The Cytoplasmic portion of the chain corresponds to 1203–1250; that stretch reads QGGSNIFITVKQKKQYRALKKLLYADVQKPTPRPRNKFQGFLFDLVTH. The stretch at 1233–1531 is one IV repeat; that stretch reads TPRPRNKFQG…WNRFDPDRTQ (299 aa). The chain crosses the membrane as a helical span at residues 1251-1272; the sequence is RVFNVIIILLICFQATTIMIQK. The Extracellular segment spans residues 1273–1276; sequence DEQS. Residues 1277 to 1305 traverse the membrane as a helical segment; sequence PQMETAIFWMNSIFVMLFTLECILKLTAF. At 1306-1312 the chain is on the cytoplasmic side; sequence RCHYFTS. The chain crosses the membrane as a helical span at residues 1313–1338; sequence AWNVHDFMVVIFSITGLLLPLTIGQY. Residues 1339–1341 are Extracellular-facing; it reads FVP. The chain crosses the membrane as a helical span at residues 1342-1362; sequence PSLVQLILLSRVIHILRPGKG. Residues 1363 to 1377 lie on the Cytoplasmic side of the membrane; that stretch reads PKVFHDLMLPLILAL. The chain crosses the membrane as a helical span at residues 1378–1402; it reads PALLNISLLIFLVMFIYAIFGMYNF. Over 1403–1420 the chain is Extracellular; the sequence is AYVKKEAGINDVSNFETF. Residues 1421 to 1444 constitute an intramembrane region (pore-forming); it reads GSSMLCLFQVTTFSGWDGMLDAIF. Over 1445–1468 the chain is Extracellular; that stretch reads NSQWSDCDPDKINPGTQVKGDCGS. An intrachain disulfide couples cysteine 1451 to cysteine 1466. Residues 1469-1504 form a helical membrane-spanning segment; the sequence is PSVGISYFVSYILISWLIIVNMYIVLIMEFLSIPSQ. The Cytoplasmic segment spans residues 1505–1681; it reads KKSRTLSEDD…EEKASIQTQI (177 aa). Over residues 1647–1662 the composition is skewed to basic and acidic residues; the sequence is NVSDTPAIDDRRDDLT. The tract at residues 1647 to 1681 is disordered; it reads NVSDTPAIDDRRDDLTSKGAHSGKIEEKASIQTQI.

It belongs to the sodium channel (TC 1.A.1.10) family. SCN7A subfamily. In terms of assembly, the sodium channel formed by SCN7A is probably a heterooligomeric complex consisting of the ion conducting pore forming alpha subunit SCN7A and regulatory beta subunits such as SCN3B. Interacts with ATP1A1; activates ATP1A1 and thereby indirectly signals to nearby neurons to regulate sodium homeostasis. In terms of tissue distribution, not tissue specific but widely expressed. Expressed in regions of the central nervous system that control body fluid ionic balance.

It is found in the cell membrane. It catalyses the reaction Na(+)(in) = Na(+)(out). Its function is as follows. Sodium leak channel functioning as an osmosensor regulating sodium ion levels in various tissues and organs. While most sodium channels are voltage-gated, SCN7A is not and lets sodium flow through membrane along its concentration gradient. In glial cells of the central nervous system, senses body-fluid sodium levels and controls salt intake behavior as well as voluntary water intake through activation of nearby neurons to maintain appropriate sodium levels in the body. By mediating sodium influx into keratinocytes, also plays a role in skin barrier homeostasis. This is Sodium channel protein type 7 subunit alpha from Mus musculus (Mouse).